Consider the following 745-residue polypeptide: Copper-transporting ATPase (745 aa).

An HMA domain is found at 1-67 (MKESFYIEGM…LIEKLGYSPK (67 aa)). At 1 to 83 (MKESFYIEGM…KKEFFSPNVK (83 aa)) the chain is on the cytoplasmic side. Cys-12 and Cys-15 together coordinate Cu cation. The helical transmembrane segment at 84–104 (LALAVIFTLFVVYLSMGAMLS) threads the bilayer. Topologically, residues 105 to 124 (PSLLPESLLTINHHSNFLNA) are extracellular. The helical transmembrane segment at 125–144 (CLQLIGALIVMHLGRDFYIQ) threads the bilayer. The Cytoplasmic segment spans residues 145 to 151 (GFKALWH). Residues 152-172 (RQPNMSSLIAIGTSAALISSL) form a helical membrane-spanning segment. Residues 173–194 (WQLYLVYTNHYTDQWSYGHYYF) are Extracellular-facing. A helical transmembrane segment spans residues 195–215 (ESVCVILMFVMVGKRIENVSK). The Cytoplasmic segment spans residues 216–343 (DKALDAMQAL…KAEISRLADK (128 aa)). Residues 344–366 (VSSVFVPSVIAIAVLAFVVWLII) form a helical membrane-spanning segment. The Extracellular portion of the chain corresponds to 367–379 (APKPDFWWNFRTA). Residues 380 to 397 (LEVFVSVLVISCPCALGL) form a helical membrane-spanning segment. The Cytoplasmic segment spans residues 398-685 (ATPMSILVAN…KLSQATIKNI (288 aa)). Asp-435 (4-aspartylphosphate intermediate) is an active-site residue. Mg(2+) is bound by residues Asp-631 and Asp-635. The chain crosses the membrane as a helical span at residues 686 to 705 (KENLFWAFCYNSVFIPLACG). The Extracellular segment spans residues 706–716 (VLYKANIMLSP). Residues 717-735 (AIAGLAMSLSSVSVVLNSQ) form a helical membrane-spanning segment. Topologically, residues 736 to 745 (RLRNFKIKDH) are cytoplasmic.

The protein belongs to the cation transport ATPase (P-type) (TC 3.A.3) family. Type IB subfamily.

It localises to the cell membrane. It catalyses the reaction Cu(2+)(in) + ATP + H2O = Cu(2+)(out) + ADP + phosphate + H(+). In terms of biological role, probably involved in copper export. The polypeptide is Copper-transporting ATPase (copA) (Helicobacter pylori (strain J99 / ATCC 700824) (Campylobacter pylori J99)).